The chain runs to 250 residues: Uracil-DNA glycosylase (250 aa).

Aspartate 91 functions as the Proton acceptor in the catalytic mechanism.

The protein belongs to the uracil-DNA glycosylase (UDG) superfamily. UNG family.

It is found in the host nucleus. The enzyme catalyses Hydrolyzes single-stranded DNA or mismatched double-stranded DNA and polynucleotides, releasing free uracil.. Excises uracil residues from the DNA which can arise as a result of misincorporation of dUMP residues by DNA polymerase or due to deamination of cytosine. Functionally, excises uracil residues from the DNA which can arise as a result of misincorporation of dUMP residues by DNA polymerase or deamination of cytosines. Therefore may reduce deleterious uracil incorporation into the viral genome, particularly in terminally differentiated cells which lack DNA repair enzymes. The chain is Uracil-DNA glycosylase (UL114) from Homo sapiens (Human).